We begin with the raw amino-acid sequence, 921 residues long: Respiratory burst oxidase homolog protein D (921 aa).

The interval 1–71 (MKMRRGNSSN…RSNSVAGGRG (71 aa)) is disordered. The Cytoplasmic portion of the chain corresponds to 1–376 (MKMRRGNSSN…KYFILDNWQR (376 aa)). Phosphoserine is present on residues serine 8, serine 9, serine 26, and serine 39. Residues 21 to 31 (NSDTNSDTESI) are compositionally biased toward polar residues. The segment covering 44–53 (RPKRASKKNA) has biased composition (basic residues). EF-hand-like stretches follow at residues 193 to 203 (SADSNGLLLSA) and 230 to 241 (NNVSGDAITKEQ). 2 EF-hand domains span residues 253–288 (SFDA…SASA) and 297–332 (QAKE…APNQ). Ca(2+) is bound by residues aspartate 266, aspartate 268, aspartate 270, arginine 272, and glutamate 277. A phosphoserine mark is found at serine 339, serine 343, and serine 347. A helical membrane pass occupies residues 377-397 (LWIMMLWLGICGGLFTYKFIQ). The Extracellular portion of the chain corresponds to 398 to 461 (YKNKAAYGVM…FDDSLNFHKV (64 aa)). A Ferric oxidoreductase domain is found at 415-572 (KGGAETLKFN…LFIIVYALLI (158 aa)). A helical transmembrane segment spans residues 462 to 482 (IASGIVVGVLLHAGAHLTCDF). Topologically, residues 483–516 (PRLIAADEDTYEPMEKYFGDQPTSYWWFVKGVEG) are cytoplasmic. A helical transmembrane segment spans residues 517 to 537 (WTGIVMVVLMAIAFTLATPWF). Residues 538–559 (RRNKLNLPNFLKKLTGFNAFWY) lie on the Extracellular side of the membrane. Residues 560–580 (THHLFIIVYALLIVHGIKLYL) traverse the membrane as a helical segment. Over 581–588 (TKIWYQKT) the chain is Cytoplasmic. Residues 589–606 (TWMYLAVPILLYASERLL) traverse the membrane as a helical segment. The Extracellular segment spans residues 607 to 734 (RAFRSSIKPV…PYGAPAQDYK (128 aa)). One can recognise an FAD-binding FR-type domain in the interval 611–732 (SSIKPVKMIK…DGPYGAPAQD (122 aa)). Residues 735-755 (KYDVVLLVGLGIGATPMISIL) form a helical membrane-spanning segment. The Cytoplasmic portion of the chain corresponds to 756–921 (KDIINNMKGP…TKFDFHKENF (166 aa)).

This sequence belongs to the RBOH (TC 5.B.1.3) family. Monomer and homodimer. Interacts with BIK1 and FLS2. Interacts with PBL13. Binds to SIK1 upon flagellin perception and becomes activated by phosphorylation. Post-translationally, phosphorylated at Ser-39, Ser-343 and Ser-347 by BIK1 upon flagellin (flg22) treatment. Activated by phosphorylation at Ser-347 mediated by SIK1 and at Ser-8, Ser-9 and Ser-339 upon flagellin (e.g. flg22) perception. As to expression, more abundant in roots than in leaves, stems or inflorescences. Expressed in mesophyll and guard cells.

The protein localises to the membrane. Inhibited by diphenylene iodinium (DPI). Calcium-dependent NADPH oxidase that generates superoxide. Involved in the generation of reactive oxygen species (ROS) during incompatible interactions with pathogens, in response to pathogen-associated molecular pattern (PAMP)-triggered immunity (PTI) signaling and in UV-B and abscisic acid ROS-dependent signaling and via SIK1 mediated activation by phosphorylation. Might be required for ROS signal amplification during light stress. This chain is Respiratory burst oxidase homolog protein D, found in Arabidopsis thaliana (Mouse-ear cress).